A 223-amino-acid chain; its full sequence is NLP effector protein 3 (223 aa).

The Conserved undecapeptide motif motif lies at 90–100 (AIMYVWYFPKD). A Conserved heptapeptide motif motif is present at residues 107–113 (GHRHDWE).

It belongs to the Necrosis inducing protein (NPP1) family.

It is found in the secreted. It localises to the host cytoplasm. Functionally, probable secreted effector that may act as a pathogen-associated molecular pattern (PAMP) recognized by the plant immune system. Seems not to induce necrosis, neither in several susceptible or resistant Vitis species nor in the dicot model plant Nicotiana benthamiana. This is NLP effector protein 3 from Plasmopara viticola (Downy mildew of grapevine).